Here is a 1692-residue protein sequence, read N- to C-terminus: Flagellar attachment zone protein 1 (1692 aa).

3 coiled-coil regions span residues 613–657 (REQE…KLQK), 684–864 (VTLD…HKVR), and 903–1607 (NDHM…SALE). 37 tandem repeats follow at residues 1012 to 1025 (EELELKAAENEKLA), 1026 to 1039 (EELELKAAENEKLA), 1040 to 1053 (EELELKVAENEKLA), 1054 to 1067 (EELELKVAENEKLA), 1068 to 1081 (EELELKAAENEKLA), 1082 to 1095 (EELELKAAENEKLA), 1096 to 1109 (EELELKAAENEKLA), 1110 to 1123 (EELELKAAENEKLA), 1124 to 1137 (EELELKAAENEKLA), 1138 to 1151 (EELELKAAENEKLA), 1152 to 1165 (EELELKAAENEKLA), 1166 to 1179 (EELELKVAENEKLA), 1180 to 1193 (EELELKAAENEKLA), 1194 to 1207 (EELELKVAENEKLA), 1208 to 1221 (EELELKAAENEKLA), 1222 to 1235 (EELELKAAENEKLA), 1236 to 1249 (EELELKAAENEKLA), 1250 to 1263 (EELELKAAENEKLA), 1264 to 1277 (EELELKVAENEKLA), 1278 to 1291 (EELELKAAENEKLA), 1292 to 1305 (EELELKVAENEKLA), 1306 to 1319 (EELELKAAENEKLA), 1320 to 1333 (EELELKVAENEKLA), 1334 to 1347 (EELELKAAENEKLA), 1348 to 1361 (EELELKVAENEKLA), 1362 to 1375 (EELELKAAENEKLA), 1376 to 1389 (EELELKAAENEKLA), 1390 to 1403 (EELELKAAENEKLA), 1404 to 1417 (EELELKAAENEKLA), 1418 to 1431 (EELELKAAENEKLA), 1432 to 1445 (EELELKVAENEKLA), 1446 to 1459 (EELELKAAENEKLA), 1460 to 1473 (EELELKVAENEKLA), 1474 to 1487 (EELELKAAENEKLA), 1488 to 1501 (EELELKAAENEKLA), 1502 to 1515 (EELELKAAENEKLA), and 1516 to 1529 (EELELKVAENKRLA). The interval 1012–1529 (EELELKAAEN…LKVAENKRLA (518 aa)) is 37 X 14 AA tandem repeats of E-E-L-E-L-K-[VA]-A-E-N-E-K-L-A.

The protein resides in the cell projection. The protein localises to the cilium. It is found in the flagellum. In terms of biological role, a component of FAZ filament that is required for correct FAZ assembly and attachment. Not essential for new flagellum growth. This is Flagellar attachment zone protein 1 from Trypanosoma brucei brucei (strain 927/4 GUTat10.1).